The chain runs to 98 residues: NADH-ubiquinone oxidoreductase chain 4L (98 aa).

3 helical membrane passes run 1 to 21, 29 to 49, and 58 to 78; these read MPII…GMLF, SLLC…LMAL, and IVPI…LALL.

It belongs to the complex I subunit 4L family. As to quaternary structure, core subunit of respiratory chain NADH dehydrogenase (Complex I) which is composed of 45 different subunits.

It localises to the mitochondrion inner membrane. The enzyme catalyses a ubiquinone + NADH + 5 H(+)(in) = a ubiquinol + NAD(+) + 4 H(+)(out). Core subunit of the mitochondrial membrane respiratory chain NADH dehydrogenase (Complex I) which catalyzes electron transfer from NADH through the respiratory chain, using ubiquinone as an electron acceptor. Part of the enzyme membrane arm which is embedded in the lipid bilayer and involved in proton translocation. The protein is NADH-ubiquinone oxidoreductase chain 4L (MT-ND4L) of Trachypithecus obscurus (Dusky leaf-monkey).